The following is a 187-amino-acid chain: UPF0232 protein MUL_0004 (187 aa).

Residues 1–12 (MNGDGEQPGPGD) are compositionally biased toward gly residues. Disordered regions lie at residues 1-77 (MNGD…QPLG) and 166-187 (ASPSWRKGPRHIAGRGPRDTYG). The segment covering 14-30 (AARDELPSMDLVRRTLA) has biased composition (basic and acidic residues). Residues 31-55 (EARAAARARGQDPGRGFAAGPAPRR) are compositionally biased toward low complexity.

The protein belongs to the UPF0232 family.

The polypeptide is UPF0232 protein MUL_0004 (Mycobacterium ulcerans (strain Agy99)).